An 86-amino-acid polypeptide reads, in one-letter code: Apolipoprotein C-I (86 aa).

The N-terminal stretch at 1-26 (MRLFLSLPVLVVALLTILEGPGPAQG) is a signal peptide.

It belongs to the apolipoprotein C1 family.

The protein resides in the secreted. Functionally, inhibitor of lipoprotein binding to the low density lipoprotein (LDL) receptor, LDL receptor-related protein, and very low density lipoprotein (VLDL) receptor. Associates with high density lipoproteins (HDL) and the triacylglycerol-rich lipoproteins in the plasma and makes up about 10% of the protein of the VLDL and 2% of that of HDL. Appears to interfere directly with fatty acid uptake and is also the major plasma inhibitor of cholesteryl ester transfer protein (CETP). Binds free fatty acids and reduces their intracellular esterification. Modulates the interaction of APOE with beta-migrating VLDL and inhibits binding of beta-VLDL to the LDL receptor-related protein. The chain is Apolipoprotein C-I (APOC1) from Plecturocebus moloch (Dusky titi monkey).